The chain runs to 179 residues: Repressor of phase 1 flagellin gene (179 aa).

In terms of biological role, transcriptional repressor of the FliC phase-1 flagellin. This Salmonella abortus-equi protein is Repressor of phase 1 flagellin gene (fljA).